A 396-amino-acid chain; its full sequence is Acetate kinase (396 aa).

Asparagine 7 contacts Mg(2+). Position 14 (lysine 14) interacts with ATP. A substrate-binding site is contributed by arginine 91. Aspartate 148 functions as the Proton donor/acceptor in the catalytic mechanism. ATP-binding positions include 208-212 (HLGNG), 283-285 (DFR), and 331-335 (GIGEN). Residue glutamate 384 participates in Mg(2+) binding.

It belongs to the acetokinase family. As to quaternary structure, homodimer. Requires Mg(2+) as cofactor. The cofactor is Mn(2+).

It is found in the cytoplasm. The enzyme catalyses acetate + ATP = acetyl phosphate + ADP. The protein operates within metabolic intermediate biosynthesis; acetyl-CoA biosynthesis; acetyl-CoA from acetate: step 1/2. Its function is as follows. Catalyzes the formation of acetyl phosphate from acetate and ATP. Can also catalyze the reverse reaction. In Desulforamulus reducens (strain ATCC BAA-1160 / DSM 100696 / MI-1) (Desulfotomaculum reducens), this protein is Acetate kinase.